The sequence spans 272 residues: Sugar-phosphatase AraL (272 aa).

This sequence belongs to the HAD-like hydrolase superfamily. The cofactor is Mg(2+).

It carries out the reaction sugar phosphate + H2O = sugar + phosphate.. The enzyme catalyses O-phospho-L-serine + H2O = L-serine + phosphate. It catalyses the reaction O-phospho-D-serine + H2O = D-serine + phosphate. Its function is as follows. Catalyzes the dephosphorylation of C5 and C6 carbon sugars in vitro. Catalyzes the dephosphorylation of 3'-AMP and phosphoserine in vitro. The protein is Sugar-phosphatase AraL (araL) of Bacillus subtilis (strain 168).